Here is a 453-residue protein sequence, read N- to C-terminus: BPI fold-containing family B member 6 (453 aa).

The signal sequence occupies residues 1 to 18; sequence MLRILCLALCSLLTGTRA. A glycan (N-linked (GlcNAc...) asparagine) is linked at Asn-114. A disulfide bridge connects residues Cys-137 and Cys-174. N-linked (GlcNAc...) asparagine glycosylation occurs at Asn-190.

Belongs to the BPI/LBP/Plunc superfamily. BPI/LBP family. As to expression, detected at very low levels in normal tonsils, and at higher levels in hypertrophic tonsils.

The protein resides in the secreted. The chain is BPI fold-containing family B member 6 (BPIFB6) from Homo sapiens (Human).